Reading from the N-terminus, the 428-residue chain is Bacteriochlorophyll synthase 44.5 kDa chain (428 aa).

The next 12 helical transmembrane spans lie at 3 to 23, 32 to 52, 73 to 93, 115 to 135, 144 to 164, 172 to 192, 225 to 245, 269 to 289, 291 to 311, 317 to 337, 358 to 378, and 393 to 413; these read LGWLQIFRLGLVQLCIGAVVV, LMVVELALPAVLPGALVALHY, FFVILGMAVLALGAFLAAVAV, GFGVGASGTSLLALLASATEP, ITWLLMIFGIAVTAGTVGHFL, LLWIVAIVTLGAVVLTTLAVW, AFTFFLFLSMTAYFLQELILE, GVFFGMLTVGLALSGLKIGSL, GWVVTGCLGSSLALMAIVALG, ALVPAVIGLGFFNGIFAVAAI, LWGAAQAIAAGFGGLVGAGAA, and LVFGAQALLFIVAAMMATGVV.

It belongs to the PucC family.

Its subcellular location is the membrane. It functions in the pathway porphyrin-containing compound metabolism; bacteriochlorophyll biosynthesis (light-independent). This Rhodobacter capsulatus (strain ATCC BAA-309 / NBRC 16581 / SB1003) protein is Bacteriochlorophyll synthase 44.5 kDa chain.